Consider the following 495-residue polypeptide: Probable cytosol aminopeptidase (495 aa).

Mn(2+) contacts are provided by Lys-258 and Asp-263. Lys-270 is an active-site residue. The Mn(2+) site is built by Asp-281, Asp-340, and Glu-342. Residue Arg-344 is part of the active site.

The protein belongs to the peptidase M17 family. Requires Mn(2+) as cofactor.

The protein localises to the cytoplasm. The enzyme catalyses Release of an N-terminal amino acid, Xaa-|-Yaa-, in which Xaa is preferably Leu, but may be other amino acids including Pro although not Arg or Lys, and Yaa may be Pro. Amino acid amides and methyl esters are also readily hydrolyzed, but rates on arylamides are exceedingly low.. It carries out the reaction Release of an N-terminal amino acid, preferentially leucine, but not glutamic or aspartic acids.. Functionally, presumably involved in the processing and regular turnover of intracellular proteins. Catalyzes the removal of unsubstituted N-terminal amino acids from various peptides. This chain is Probable cytosol aminopeptidase, found in Leptospira interrogans serogroup Icterohaemorrhagiae serovar Lai (strain 56601).